The following is a 518-amino-acid chain: Glutamate--cysteine ligase (518 aa).

It belongs to the glutamate--cysteine ligase type 1 family. Type 1 subfamily.

It carries out the reaction L-cysteine + L-glutamate + ATP = gamma-L-glutamyl-L-cysteine + ADP + phosphate + H(+). Its pathway is sulfur metabolism; glutathione biosynthesis; glutathione from L-cysteine and L-glutamate: step 1/2. This Buchnera aphidicola subsp. Acyrthosiphon pisum (strain APS) (Acyrthosiphon pisum symbiotic bacterium) protein is Glutamate--cysteine ligase (gshA).